The sequence spans 275 residues: Chemotaxis protein methyltransferase Cher2 (275 aa).

In terms of domain architecture, CheR-type methyltransferase spans 1 to 275; sequence MSTGNLDFEQ…CSPGIIYQAK (275 aa). S-adenosyl-L-methionine is bound by residues N73, T75, R79, E116, D145, 201–202, and 218–219; these read NL and RN.

In terms of assembly, monomer.

It carries out the reaction L-glutamyl-[protein] + S-adenosyl-L-methionine = [protein]-L-glutamate 5-O-methyl ester + S-adenosyl-L-homocysteine. In terms of biological role, methylation of the membrane-bound methyl-accepting chemotaxis proteins (MCP) to form gamma-glutamyl methyl ester residues in MCP. Methylates the McpS chemotaxis receptor. This chain is Chemotaxis protein methyltransferase Cher2 (cheR2), found in Pseudomonas putida (strain ATCC 47054 / DSM 6125 / CFBP 8728 / NCIMB 11950 / KT2440).